The sequence spans 711 residues: Ferric reductase transmembrane component 3 (711 aa).

The signal sequence occupies residues 1–20 (MYWVLLCGSILLCCLSGASA). The Extracellular portion of the chain corresponds to 21 to 166 (SPAKTKMYGK…YANYDIGHTY (146 aa)). Asparagine 85, asparagine 108, asparagine 120, and asparagine 134 each carry an N-linked (GlcNAc...) asparagine glycan. The chain crosses the membrane as a helical span at residues 167 to 187 (GGIICAYFVGVMILASILHYL). Over 188-237 (SYTPFKTALFKQRLVRYVRRYLTIPTIWGKHASSFSYLKIFTGFLPTRSE) the chain is Cytoplasmic. A helical membrane pass occupies residues 238–258 (GVIILGYLVLHTVFLAYGYQY). The Extracellular segment spans residues 259-280 (DPYNLIFDSRREQIARYVADRS). One can recognise a Ferric oxidoreductase domain in the interval 280 to 414 (SGVLAFAHFP…SGIEWIYAAI (135 aa)). The helical transmembrane segment at 281-301 (GVLAFAHFPLIALFAGRNNFL) threads the bilayer. Topologically, residues 302–321 (EFISGVKYTSFIMFHKWLGR) are cytoplasmic. Positions 316 and 330 each coordinate heme. A helical membrane pass occupies residues 322-341 (MMFLDAVIHGAAYTSYSVFY). Residues 342 to 353 (KDWAASKEETYW) are Extracellular-facing. The chain crosses the membrane as a helical span at residues 354 to 374 (QFGVAALCIVGVMVFFSLAMF). Residues 375-376 (RK) lie on the Cytoplasmic side of the membrane. A helical membrane pass occupies residues 377–397 (FFYEAFLFLHIVLGALFFYTC). A heme-binding site is contributed by histidine 386. Position 398 (tryptophan 398) is a topological domain, extracellular. A helical transmembrane segment spans residues 399 to 419 (EHVVELSGIEWIYAAIAIWTI). Residue histidine 400 participates in heme binding. The region spanning 415-534 (AIWTIDRLIR…EGPYGSSSPV (120 aa)) is the FAD-binding FR-type domain. Over 420–711 (DRLIRIVRVS…IEYFEEYQSW (292 aa)) the chain is Cytoplasmic. 479 to 485 (HPFTVLD) contributes to the FAD binding site. NADP(+)-binding positions include 526-529 (GPYG) and 677-678 (CG).

The protein belongs to the ferric reductase (FRE) family. FAD serves as cofactor. The cofactor is heme.

The protein localises to the cell membrane. It catalyses the reaction 2 a Fe(II)-siderophore + NADP(+) + H(+) = 2 a Fe(III)-siderophore + NADPH. Its function is as follows. Siderophore-iron reductase responsible for reducing extracellular iron prior to import. Catalyzes the reductive uptake of Fe(3+) bound to di- and trihydroxamate siderophores. Fe(3+) is reduced to Fe(2+), which then dissociates from the siderophore and can be imported by the high-affinity Fe(2+) transport complex in the plasma membrane. The sequence is that of Ferric reductase transmembrane component 3 (FRE3) from Saccharomyces cerevisiae (strain ATCC 204508 / S288c) (Baker's yeast).